Reading from the N-terminus, the 284-residue chain is 2-dehydro-3-deoxyphosphooctonate aldolase (284 aa).

It belongs to the KdsA family.

Its subcellular location is the cytoplasm. The enzyme catalyses D-arabinose 5-phosphate + phosphoenolpyruvate + H2O = 3-deoxy-alpha-D-manno-2-octulosonate-8-phosphate + phosphate. It participates in carbohydrate biosynthesis; 3-deoxy-D-manno-octulosonate biosynthesis; 3-deoxy-D-manno-octulosonate from D-ribulose 5-phosphate: step 2/3. The protein operates within bacterial outer membrane biogenesis; lipopolysaccharide biosynthesis. This chain is 2-dehydro-3-deoxyphosphooctonate aldolase, found in Pseudoalteromonas translucida (strain TAC 125).